The primary structure comprises 1013 residues: MLFSGGQYSPVGRPEEVLLIYKIFLVIICFHAILVTSLKENAGNSSLLSPSAESSLVSLVPYSNGTPDAASEVLSTLNRTEKSKITILKTFNASGVKSQRNICNLSSICSDSVFFRGEIVFQHDDHYNVTQNQDIVNSTFAGVLSLSELKRTELNKTLQTLSETYFIVCATAEAQNTLNCTFTVKLNETMNVCAMMVTFKSVQIRPMEQCCCSPRTPCPSSPEELEKLQCDLQDPIVCLADQPHGPPVSSSSKPVPVVPQATIFSHVASDFSLAEPLDHALMTSSTPSLAQETRLPSPQPTISLTSSPAIDLPVQHVVASSSLPQTDLSHTLSPVQSSIPSPTTAAPSVPEKVVAISTPPGETVVNTSSVPDLEAQVSQMEKALSLGSLEPNLAGEMVNRVSKLLHSPLALLAPLAQRLLKVVDAIGLQLNFSSTTISLTSPSLALAVIRVNASNFNTTTFAAQDPANLQVSLEAQAPKNSIGAITLPSSLMSNLPASEVELASRVQFNFFETPALFQDPSLENLSLISYVISSSVTNMTIKNLTRNVTVALKHINPSQDDLTVKCVFWDLNRNGGRGGWSSDGCSVKEKRMNETICTCSHLTSFGILLDLSRTSLPPSQMMALTFITYIGCGLSSIFLSVTLVTYIAFEKIRRDYPSKILIQLCAALLLLNLVFLLDSWIALYNARGFCISVAVFLHYFLLVSFTWMGLEAFHMYLALVKVFNTYIRKYILKFCIVGWGIPAVVVSIVLTISPDNYGIGSYGKFPNGTPDDFCWINSSVVFYITVVGYFCVIFLLNVSMFIVVLVQLCRIKKKKQLGAQRKTSIQDLRSIAGLTFLLGITWGFAFFAWGPVNLTFMYLFAIFNTLQGFFIFIFYCAAKENVRKQWRRYLCCGKLRLAENSDWSKTATNGLKKQTVNQGVSSSSNSLQSSCNSTNSTTLLVNSDCSVHASGNGNASTERNGVSFSVQNGDVCLHDLTGKQHMFSDKEDSCNGKSRMALRRTSKRGSLHFIEQM.

The signal sequence occupies residues 1–37; sequence MLFSGGQYSPVGRPEEVLLIYKIFLVIICFHAILVTS. Residues 38–623 lie on the Extracellular side of the membrane; that stretch reads LKENAGNSSL…TSLPPSQMMA (586 aa). 18 N-linked (GlcNAc...) asparagine glycosylation sites follow: Asn-44, Asn-78, Asn-92, Asn-104, Asn-128, Asn-137, Asn-155, Asn-179, Asn-187, Asn-366, Asn-431, Asn-452, Asn-457, Asn-524, Asn-538, Asn-543, Asn-547, and Asn-593. Residues 457–615 enclose the GAIN-B domain; sequence NTTTFAAQDP…GILLDLSRTS (159 aa). 2 disulfides stabilise this stretch: Cys-566–Cys-597 and Cys-585–Cys-599. The GPS stretch occupies residues 566 to 615; sequence CVFWDLNRNGGRGGWSSDGCSVKEKRMNETICTCSHLTSFGILLDLSRTS. The interval 604–615 is stachel; sequence SFGILLDLSRTS. Residues 624-644 form a helical membrane-spanning segment; it reads LTFITYIGCGLSSIFLSVTLV. The Cytoplasmic segment spans residues 645-663; sequence TYIAFEKIRRDYPSKILIQ. A helical transmembrane segment spans residues 664-684; sequence LCAALLLLNLVFLLDSWIALY. Residues 685-688 are Extracellular-facing; it reads NARG. A helical membrane pass occupies residues 689 to 709; it reads FCISVAVFLHYFLLVSFTWMG. The cysteines at positions 690 and 774 are disulfide-linked. Topologically, residues 710-733 are cytoplasmic; the sequence is LEAFHMYLALVKVFNTYIRKYILK. A helical transmembrane segment spans residues 734-754; the sequence is FCIVGWGIPAVVVSIVLTISP. Topologically, residues 755–785 are extracellular; that stretch reads DNYGIGSYGKFPNGTPDDFCWINSSVVFYIT. The N-linked (GlcNAc...) asparagine glycan is linked to Asn-777. A helical transmembrane segment spans residues 786–806; the sequence is VVGYFCVIFLLNVSMFIVVLV. Residues 807 to 830 are Cytoplasmic-facing; it reads QLCRIKKKKQLGAQRKTSIQDLRS. The helical transmembrane segment at 831 to 851 threads the bilayer; sequence IAGLTFLLGITWGFAFFAWGP. Topologically, residues 852 to 853 are extracellular; sequence VN. Residue Asn-853 is glycosylated (N-linked (GlcNAc...) asparagine). The chain crosses the membrane as a helical span at residues 854-874; sequence LTFMYLFAIFNTLQGFFIFIF. Asn-864 is a 3beta-hydroxyandrost-5-en-17-one binding site. At 875–1013 the chain is on the cytoplasmic side; that stretch reads YCAAKENVRK…RGSLHFIEQM (139 aa). Ser-1006 is modified (phosphoserine).

This sequence belongs to the G-protein coupled receptor 2 family. Adhesion G-protein coupled receptor (ADGR) subfamily. As to quaternary structure, heterodimer of 2 chains generated by proteolytic processing; the large extracellular N-terminal fragment and the membrane-bound C-terminal fragment predominantly remain associated and non-covalently linked. Interacts with CFTR. Post-translationally, proteolytically cleaved into 2 subunits, an extracellular subunit and a seven-transmembrane subunit. In terms of processing, highly glycosylated. Epididymis-specific expression (at protein level). Associated with apical membranes of efferent ductule and proximal epididymal duct epithelia.

It is found in the apical cell membrane. With respect to regulation, forms a heterodimer of 2 chains generated by proteolytic processing that remain associated through non-covalent interactions mediated by the GAIN-B domain. In the inactivated receptor, the Stachel sequence (also named stalk) is embedded in the GAIN-B domain, where it adopts a beta-strand conformation. On activation, the Stachel moves into the 7 transmembrane region and adopts a twisted hook-shaped configuration that forms contacts within the receptor, leading to coupling of a G-alpha protein, which activates signaling. The cleaved GAIN-B and N-terminal domains can then dissociate from the rest of the receptor. Deoxycorticosterone (DOC) acts as an antagonist of ADGRG2. Functionally, adhesion G-protein coupled receptor (aGPCR) for steroid hormones, such as dehydroepiandrosterone (DHEA; also named 3beta-hydroxyandrost-5-en-17-one) and androstenedione. Involved in a signal transduction pathway controlling epididymal function and male fertility. Ligand binding causes a conformation change that triggers signaling via guanine nucleotide-binding proteins (G proteins) and modulates the activity of downstream effectors, such as adenylate cyclase. ADGRG2 is coupled to G(s) G proteins and mediates activation of adenylate cyclase activity. Also able to couple with G(q) G proteins in vitro. May regulate fluid exchange within epididymis. In Rattus norvegicus (Rat), this protein is Adhesion G-protein coupled receptor G2.